Reading from the N-terminus, the 309-residue chain is tRNA dimethylallyltransferase (309 aa).

9–16 (GPTAVGKT) is an ATP binding site. 11-16 (TAVGKT) lines the substrate pocket. The segment at 34-37 (DSMQ) is interaction with substrate tRNA.

This sequence belongs to the IPP transferase family. Monomer. Requires Mg(2+) as cofactor.

It carries out the reaction adenosine(37) in tRNA + dimethylallyl diphosphate = N(6)-dimethylallyladenosine(37) in tRNA + diphosphate. Its function is as follows. Catalyzes the transfer of a dimethylallyl group onto the adenine at position 37 in tRNAs that read codons beginning with uridine, leading to the formation of N6-(dimethylallyl)adenosine (i(6)A). In Clostridium acetobutylicum (strain ATCC 824 / DSM 792 / JCM 1419 / IAM 19013 / LMG 5710 / NBRC 13948 / NRRL B-527 / VKM B-1787 / 2291 / W), this protein is tRNA dimethylallyltransferase.